We begin with the raw amino-acid sequence, 157 residues long: uncharacterized protein (157 aa).

Positions 1–157 are disordered; it reads MNRGPPLRSR…SFSFLVPSNS (157 aa). Over residues 8-31 the composition is skewed to pro residues; that stretch reads RSRPPSSPPPASAFPGPSPFPSPS. Residues 62 to 71 are compositionally biased toward basic residues; it reads RTSHPPRCPH. Positions 76–95 are enriched in pro residues; that stretch reads PSAPSPPFTPPHPLPTPTPS. Low complexity-rich tracts occupy residues 96–117 and 124–157; these read SSPR…SLAS and SFSS…PSNS.

This is an uncharacterized protein from Vitis vinifera (Grape).